The chain runs to 230 residues: Transmembrane protein 221 (230 aa).

4 helical membrane-spanning segments follow: residues Ala-12–Phe-32, Ala-73–Gly-93, Leu-125–Phe-145, and Ile-147–Ile-167. Positions Arg-184 to Phe-230 are disordered. Residues Glu-194–Ser-204 are compositionally biased toward basic and acidic residues.

The protein localises to the membrane. This is Transmembrane protein 221 (Tmem221) from Mus musculus (Mouse).